We begin with the raw amino-acid sequence, 595 residues long: Chaperone protein HscA homolog (595 aa).

Belongs to the heat shock protein 70 family.

Chaperone involved in the maturation of iron-sulfur cluster-containing proteins. Has a low intrinsic ATPase activity which is markedly stimulated by HscB. This Rickettsia peacockii (strain Rustic) protein is Chaperone protein HscA homolog.